Reading from the N-terminus, the 232-residue chain is MEQIKYLLIGIIFSSAISSSLQCAYENCADWANPGQSQKHTMCLYPTTALGNKCNEGRIIQLTEADKQYILQLHNELRAKVASGGESQGSNGPQPAGKIGPLKWDNEIAEIAQRWVNQCTFEHDKCRNTKANSVGQNLYMMGSSEKSENTHDILTASVNSWYSEVKDFDNRSVREYKFEFTTGHYSQVVWGDTTHVGCGLVQYKDSGFYTTMVACNYSPAGNLIGGTVYPTL.

An N-terminal signal peptide occupies residues 1–23; the sequence is MEQIKYLLIGIIFSSAISSSLQC. Disulfide bonds link Cys-28–Cys-43, Cys-54–Cys-119, and Cys-198–Cys-215. The SCP domain maps to 71–217; it reads LQLHNELRAK…FYTTMVACNY (147 aa).

It belongs to the CRISP family. Venom allergen 5-like subfamily. Expressed by the venom gland.

The protein localises to the secreted. This chain is Venom allergen 5, found in Microctonus hyperodae (Parasitoid wasp).